The following is a 210-amino-acid chain: Large ribosomal subunit protein uL4 (210 aa).

Positions 41 to 51 (ANARQGTQSTK) are enriched in polar residues. Disordered stretches follow at residues 41–60 (ANAR…QGSS) and 67–98 (KGTG…DFSK).

Belongs to the universal ribosomal protein uL4 family. Part of the 50S ribosomal subunit.

Its function is as follows. One of the primary rRNA binding proteins, this protein initially binds near the 5'-end of the 23S rRNA. It is important during the early stages of 50S assembly. It makes multiple contacts with different domains of the 23S rRNA in the assembled 50S subunit and ribosome. In terms of biological role, forms part of the polypeptide exit tunnel. In Dehalococcoides mccartyi (strain ATCC BAA-2266 / KCTC 15142 / 195) (Dehalococcoides ethenogenes (strain 195)), this protein is Large ribosomal subunit protein uL4.